The following is a 223-amino-acid chain: Endonuclease NucS (223 aa).

The protein belongs to the NucS endonuclease family.

The protein resides in the cytoplasm. Its function is as follows. Cleaves both 3' and 5' ssDNA extremities of branched DNA structures. The chain is Endonuclease NucS from Streptomyces griseus subsp. griseus (strain JCM 4626 / CBS 651.72 / NBRC 13350 / KCC S-0626 / ISP 5235).